We begin with the raw amino-acid sequence, 235 residues long: Small ribosomal subunit protein uS3 (235 aa).

One can recognise a KH type-2 domain in the interval 39–107; it reads IREILHKELK…DVVINIVEIR (69 aa). Positions 215–235 are disordered; that stretch reads QDKRMAESDGGGSSRPRRDAA.

This sequence belongs to the universal ribosomal protein uS3 family. In terms of assembly, part of the 30S ribosomal subunit. Forms a tight complex with proteins S10 and S14.

Functionally, binds the lower part of the 30S subunit head. Binds mRNA in the 70S ribosome, positioning it for translation. The protein is Small ribosomal subunit protein uS3 of Rhodopseudomonas palustris (strain TIE-1).